Consider the following 91-residue polypeptide: Large ribosomal subunit protein bL31B (91 aa).

It belongs to the bacterial ribosomal protein bL31 family. Type B subfamily. As to quaternary structure, part of the 50S ribosomal subunit.

The chain is Large ribosomal subunit protein bL31B from Neisseria meningitidis serogroup A / serotype 4A (strain DSM 15465 / Z2491).